A 723-amino-acid polypeptide reads, in one-letter code: ADP-ribosylation factor-binding protein GGA3 (723 aa).

The segment at 1–313 (MAEAEGESLE…GEVATLTLPD (313 aa)) is binds to ARF1 (in long isoform). The 131-residue stretch at 16 to 146 (ATNPSNRQED…MLKRQGIVQS (131 aa)) folds into the VHS domain. Ser159 and Ser275 each carry phosphoserine. Residues 171–298 (DEEKSKLLAK…VINSYKTIIE (128 aa)) enclose the GAT domain. The interval 299–593 (GQVINGEVAT…IHVPLESIKP (295 aa)) is unstructured hinge. The disordered stretch occupies residues 339 to 384 (SSVLAPAPTPPSSGIPILPPPPQASGPPRSRSSSQAEATLGPSSTS). A compositionally biased stretch (pro residues) spans 345–363 (APTPPSSGIPILPPPPQAS). The segment covering 364–374 (GPPRSRSSSQA) has biased composition (low complexity). The DXXLL motif lies at 391 to 395 (DEELL). Positions 428–464 (DFFSPRPGTAACGASDAPLLQPSAPSSSSSQAPLPPP) are disordered. Residues 441-459 (ASDAPLLQPSAPSSSSSQA) show a composition bias toward low complexity. Positions 594–715 (SSALPVTAYD…TEVGEVDQFP (122 aa)) constitute a GAE domain.

This sequence belongs to the GGA protein family. As to quaternary structure, monomer. Interacts with GGA1 and GGA2. Binds to clathrin and activated ARFs, such as ARF1, ARF5 and ARF6. Binds RABEP1 and RABGEF1. Interacts with the membrane proteins M6PR/CD-MPR and IGF2R/CI-MPR and the accessory proteins SYNRG, EPN4, NECAP1, NECAP2 and AFTPH/aftiphilin. Interacts with TSG101 and UBC. Interacts with ADRA2B. Interacts with NTRK1; the interaction is independent of NTRK1 activation and ubiquitination. Interacts (via VHS domain) with BACE1 (via DXXLL motif). Post-translationally, phosphorylated by CK2 and dephosphorylated by PP2A. Phosphorylation of GGA3 allows the internal DXXLL motif to bind the VHS domain and to inhibit the recognition of cargo signals. Ubiquitinated. In terms of processing, proteolytically cleaved during apoptosis by CASP3. In terms of tissue distribution, ubiquitously expressed.

It is found in the golgi apparatus. Its subcellular location is the trans-Golgi network membrane. The protein localises to the endosome membrane. It localises to the early endosome membrane. The protein resides in the recycling endosome membrane. Its function is as follows. Plays a role in protein sorting and trafficking between the trans-Golgi network (TGN) and endosomes. Mediates the ARF-dependent recruitment of clathrin to the TGN and binds ubiquitinated proteins and membrane cargo molecules with a cytosolic acidic cluster-dileucine (DXXLL) motif. Mediates export of the GPCR receptor ADRA2B to the cell surface. nvolved in BACE1 transport and sorting as well as regulation of BACE1 protein levels. Regulates retrograde transport of BACE1 from endosomes to the trans-Golgi network via interaction through the VHS motif and dependent of BACE1 phosphorylation. Modulates BACE1 protein levels independently of the interaction between VHS domain and DXXLL motif through recognition of ubiquitination. Key player in a novel DXXLL-mediated endosomal sorting machinery to the recycling pathway that targets NTRK1 to the plasma membrane. This chain is ADP-ribosylation factor-binding protein GGA3, found in Homo sapiens (Human).